The primary structure comprises 453 residues: tRNA modification GTPase MnmE (453 aa).

Residues R22, E79, and K119 each contribute to the (6S)-5-formyl-5,6,7,8-tetrahydrofolate site. Residues G215–G376 form the TrmE-type G domain. Position 225 (N225) interacts with K(+). GTP contacts are provided by residues N225–S230, T244–T250, D269–G272, and N334–D337. S229 lines the Mg(2+) pocket. 3 residues coordinate K(+): T244, I246, and T249. T250 contributes to the Mg(2+) binding site. K453 is a binding site for (6S)-5-formyl-5,6,7,8-tetrahydrofolate.

It belongs to the TRAFAC class TrmE-Era-EngA-EngB-Septin-like GTPase superfamily. TrmE GTPase family. As to quaternary structure, homodimer. Heterotetramer of two MnmE and two MnmG subunits. K(+) is required as a cofactor.

Its subcellular location is the cytoplasm. Exhibits a very high intrinsic GTPase hydrolysis rate. Involved in the addition of a carboxymethylaminomethyl (cmnm) group at the wobble position (U34) of certain tRNAs, forming tRNA-cmnm(5)s(2)U34. The protein is tRNA modification GTPase MnmE of Vibrio cholerae serotype O1 (strain ATCC 39315 / El Tor Inaba N16961).